The primary structure comprises 92 residues: UPF0223 protein Sez_0908 (92 aa).

It belongs to the UPF0223 family.

The polypeptide is UPF0223 protein Sez_0908 (Streptococcus equi subsp. zooepidemicus (strain MGCS10565)).